The following is a 247-amino-acid chain: Small ribosomal subunit protein uS2 (247 aa).

The protein belongs to the universal ribosomal protein uS2 family.

This is Small ribosomal subunit protein uS2 from Ectopseudomonas mendocina (strain ymp) (Pseudomonas mendocina).